The sequence spans 206 residues: Ribosomal RNA large subunit methyltransferase E (206 aa).

Positions 60, 62, 80, 96, and 121 each coordinate S-adenosyl-L-methionine. Residue Lys161 is the Proton acceptor of the active site.

The protein belongs to the class I-like SAM-binding methyltransferase superfamily. RNA methyltransferase RlmE family.

It is found in the cytoplasm. The catalysed reaction is uridine(2552) in 23S rRNA + S-adenosyl-L-methionine = 2'-O-methyluridine(2552) in 23S rRNA + S-adenosyl-L-homocysteine + H(+). Specifically methylates the uridine in position 2552 of 23S rRNA at the 2'-O position of the ribose in the fully assembled 50S ribosomal subunit. The polypeptide is Ribosomal RNA large subunit methyltransferase E (Francisella philomiragia subsp. philomiragia (strain ATCC 25017 / CCUG 19701 / FSC 153 / O#319-036)).